The sequence spans 60 residues: Large ribosomal subunit protein bL32 (60 aa).

Belongs to the bacterial ribosomal protein bL32 family.

In Kosmotoga olearia (strain ATCC BAA-1733 / DSM 21960 / TBF 19.5.1), this protein is Large ribosomal subunit protein bL32.